A 285-amino-acid chain; its full sequence is Phosphatidylglycerol--prolipoprotein diacylglyceryl transferase (285 aa).

A run of 4 helical transmembrane segments spans residues 30 to 50 (LEIR…HWHI), 67 to 87 (LMLW…ILLY), 103 to 123 (WHGG…VSIV), and 129 to 149 (VRVM…LFLG). R150 serves as a coordination point for a 1,2-diacyl-sn-glycero-3-phospho-(1'-sn-glycerol). The next 3 membrane-spanning stretches (helical) occupy residues 184–204 (SQVY…SILA), 213–233 (FGVL…AVEF), and 252–272 (GQVL…LTVL).

This sequence belongs to the Lgt family.

The protein resides in the cell inner membrane. It catalyses the reaction L-cysteinyl-[prolipoprotein] + a 1,2-diacyl-sn-glycero-3-phospho-(1'-sn-glycerol) = an S-1,2-diacyl-sn-glyceryl-L-cysteinyl-[prolipoprotein] + sn-glycerol 1-phosphate + H(+). It functions in the pathway protein modification; lipoprotein biosynthesis (diacylglyceryl transfer). Its function is as follows. Catalyzes the transfer of the diacylglyceryl group from phosphatidylglycerol to the sulfhydryl group of the N-terminal cysteine of a prolipoprotein, the first step in the formation of mature lipoproteins. This is Phosphatidylglycerol--prolipoprotein diacylglyceryl transferase from Anaplasma marginale (strain Florida).